We begin with the raw amino-acid sequence, 186 residues long: Large ribosomal subunit protein uL10 (186 aa).

Belongs to the universal ribosomal protein uL10 family. In terms of assembly, part of the ribosomal stalk of the 50S ribosomal subunit. The N-terminus interacts with L11 and the large rRNA to form the base of the stalk. The C-terminus forms an elongated spine to which L12 dimers bind in a sequential fashion forming a multimeric L10(L12)X complex.

Functionally, forms part of the ribosomal stalk, playing a central role in the interaction of the ribosome with GTP-bound translation factors. The sequence is that of Large ribosomal subunit protein uL10 (rplJ) from Streptomyces virginiae (Streptomyces cinnamonensis).